The primary structure comprises 179 residues: Ribosome maturation factor RimM (179 aa).

Residues 99–174 (EEDEYYFDQI…IMIVDLPEGL (76 aa)) form the PRC barrel domain.

It belongs to the RimM family. Binds ribosomal protein uS19.

It localises to the cytoplasm. An accessory protein needed during the final step in the assembly of 30S ribosomal subunit, possibly for assembly of the head region. Essential for efficient processing of 16S rRNA. May be needed both before and after RbfA during the maturation of 16S rRNA. It has affinity for free ribosomal 30S subunits but not for 70S ribosomes. The protein is Ribosome maturation factor RimM of Natranaerobius thermophilus (strain ATCC BAA-1301 / DSM 18059 / JW/NM-WN-LF).